Reading from the N-terminus, the 175-residue chain is Cuticle protein 16.5, isoform B (175 aa).

Tandem repeats lie at residues 17 to 20, 25 to 28, 31 to 34, 38 to 41, 44 to 47, 51 to 54, 57 to 60, 64 to 67, 70 to 73, 77 to 80, 83 to 86, 91 to 94, 99 to 102, 106 to 109, 134 to 137, 144 to 147, 151 to 154, 158 to 161, and 165 to 168.

Functionally, component of the cuticle of migratory locust which contains more than 100 different structural proteins. The sequence is that of Cuticle protein 16.5, isoform B from Locusta migratoria (Migratory locust).